Here is a 200-residue protein sequence, read N- to C-terminus: Molybdopterin synthase catalytic subunit (200 aa).

Positions 16 to 30 are enriched in polar residues; sequence KLPSSHQSVEDSASE. Positions 16–43 are disordered; the sequence is KLPSSHQSVEDSASEPSGYEAKDPPQDT. Residue S20 is modified to Phosphoserine. Substrate-binding positions include 154-155, K170, and 177-179; these read HR and KKE.

This sequence belongs to the MoaE family. MOCS2B subfamily. As to quaternary structure, heterotetramer; composed of 2 small (MOCS2A) and 2 large (MOCS2B) subunits.

It localises to the cytoplasm. The protein resides in the cytosol. The catalysed reaction is 2 [molybdopterin-synthase sulfur-carrier protein]-C-terminal-Gly-aminoethanethioate + cyclic pyranopterin phosphate + H2O = molybdopterin + 2 [molybdopterin-synthase sulfur-carrier protein]-C-terminal Gly-Gly + 2 H(+). Its pathway is cofactor biosynthesis; molybdopterin biosynthesis. Catalytic subunit of the molybdopterin synthase complex, a complex that catalyzes the conversion of precursor Z into molybdopterin. Acts by mediating the incorporation of 2 sulfur atoms from thiocarboxylated MOCS2A into precursor Z to generate a dithiolene group. The chain is Molybdopterin synthase catalytic subunit from Rattus norvegicus (Rat).